We begin with the raw amino-acid sequence, 340 residues long: Tetraacyldisaccharide 4'-kinase (340 aa).

47-54 (SVGGTGKT) contributes to the ATP binding site.

This sequence belongs to the LpxK family.

It catalyses the reaction a lipid A disaccharide + ATP = a lipid IVA + ADP + H(+). It participates in glycolipid biosynthesis; lipid IV(A) biosynthesis; lipid IV(A) from (3R)-3-hydroxytetradecanoyl-[acyl-carrier-protein] and UDP-N-acetyl-alpha-D-glucosamine: step 6/6. Transfers the gamma-phosphate of ATP to the 4'-position of a tetraacyldisaccharide 1-phosphate intermediate (termed DS-1-P) to form tetraacyldisaccharide 1,4'-bis-phosphate (lipid IVA). This Flavobacterium johnsoniae (strain ATCC 17061 / DSM 2064 / JCM 8514 / BCRC 14874 / CCUG 350202 / NBRC 14942 / NCIMB 11054 / UW101) (Cytophaga johnsonae) protein is Tetraacyldisaccharide 4'-kinase.